The primary structure comprises 983 residues: Protein CLASP-3 (983 aa).

Disordered stretches follow at residues Y356 to A393 and S666 to S690. The segment covering R359 to T372 has biased composition (low complexity). The stretch at I918 to H956 is one HEAT repeat.

It belongs to the CLASP family.

It is found in the cytoplasm. The protein localises to the cytoskeleton. Functionally, microtubule plus-end tracking protein that promotes the stabilization of dynamic microtubules. The sequence is that of Protein CLASP-3 (cls-3) from Caenorhabditis elegans.